The chain runs to 225 residues: Transcriptional activator protein BglJ (225 aa).

Positions 146–211 constitute an HTH luxR-type domain; the sequence is YINQSRTLSP…GLLEAADILL (66 aa). Positions 170-189 form a DNA-binding region, H-T-H motif; sequence MTQIAEQLKRNIKTIRAHKF.

In terms of assembly, forms a complex with RcsB; genetically both BglJ and RcsB are required to relieve bgl operon repression by H-NS and by StpA.

Its function is as follows. A crytic transcriptional activator. When its expression is induced it relieves H-NS repression of the bgl operon. Acts independently of transcription factor LeuO. This is Transcriptional activator protein BglJ (bglJ) from Escherichia coli (strain K12).